A 329-amino-acid polypeptide reads, in one-letter code: T-lymphocyte activation antigen CD86 (329 aa).

Residues 1–23 (MDPQCTMGLSNILFVMAFLLSGA) form the signal peptide. The Extracellular segment spans residues 24–247 (APLKIQAYFN…DPQPPPDHIP (224 aa)). N33, N47, N135, N146, N154, N177, N192, and N213 each carry an N-linked (GlcNAc...) asparagine glycan. The region spanning 33-131 (NETADLPCQF…RIHQMNSELS (99 aa)) is the Ig-like V-type domain. A disulfide bridge connects residues C40 and C110. In terms of domain architecture, Ig-like C2-type spans 150–225 (NVYINLTCSS…IFCILETDKT (76 aa)). C157 and C218 are joined by a disulfide. A helical membrane pass occupies residues 248–268 (WITAVLPTVIICVMVFCLILW). The Cytoplasmic portion of the chain corresponds to 269–329 (KWKKKKRPRN…SSCDKSDTCF (61 aa)). A disordered region spans residues 277–329 (RNSYKCGTNTMEREESEQTKKREKIHIPERSDEAQRVFKSSKTSSCDKSDTCF). Basic and acidic residues predominate over residues 287–312 (MEREESEQTKKREKIHIPERSDEAQR).

As to quaternary structure, homodimer. Interacts with MARCH8. Interacts (via cytoplasmic domain) with PHB1 and PHB2; the interactions increases after priming with CD40. Interacts with CD28. In terms of assembly, (Microbial infection) Interacts with adenovirus subgroup b fiber protein. (Microbial infection) Interacts with Orthopoxvirus OPG038/M2 protein, inhibiting the interaction with CTLA4 and CD28. In terms of processing, polyubiquitinated; which is promoted by MARCH8 and results in endocytosis and lysosomal degradation. As to expression, expressed by activated B-lymphocytes and monocytes.

The protein localises to the cell membrane. Receptor involved in the costimulatory signal essential for T-lymphocyte proliferation and interleukin-2 production, by binding CD28 or CTLA-4. May play a critical role in the early events of T-cell activation and costimulation of naive T-cells, such as deciding between immunity and anergy that is made by T-cells within 24 hours after activation. Also involved in the regulation of B cells function, plays a role in regulating the level of IgG(1) produced. Upon CD40 engagement, activates NF-kappa-B signaling pathway via phospholipase C and protein kinase C activation. Functionally, interferes with the formation of CD86 clusters, and thus acts as a negative regulator of T-cell activation. Its function is as follows. (Microbial infection) Acts as a receptor for adenovirus subgroup B. The sequence is that of T-lymphocyte activation antigen CD86 (CD86) from Homo sapiens (Human).